Reading from the N-terminus, the 707-residue chain is Protein MICRORCHIDIA 7 (707 aa).

Basic and acidic residues-rich tracts occupy residues 1–11 (MDNSIHVKREI) and 575–587 (DNRD…DREG). Disordered stretches follow at residues 1–22 (MDNS…AGFP) and 568–619 (EKSA…SGKD). A compositionally biased stretch (polar residues) spans 590 to 613 (SIKTPTPASDKFYSSSYPNHNGDN). Positions 620 to 701 (GARLQEELRR…NKIKKMEGSK (82 aa)) form a coiled coil. The Nuclear localization signal motif lies at 633–640 (RRKALEVE).

This sequence belongs to the MORC ATPase protein family. Homodimer and heterodimer. Component of an RNA-directed DNA methylation (RdDM) complex. Forms homomeric complexes. Mg(2+) serves as cofactor. It depends on Mn(2+) as a cofactor.

It localises to the nucleus. Functionally, exhibits ATPase activity. Binds DNA/RNA in a non-specific manner and exhibits endonuclease activity. Probably involved in DNA repair. Involved in RNA-directed DNA methylation (RdDM) as a component of the RdDM machinery and required for gene silencing. May also be involved in the regulation of chromatin architecture to maintain gene silencing. Together with MORC4, acts to suppress a wide set of non-methylated protein-coding genes, especially involved in pathogen response. Positive regulators of defense against the oomycete Hyaloperonospora arabidopsidis (Hpa). This chain is Protein MICRORCHIDIA 7, found in Arabidopsis thaliana (Mouse-ear cress).